The following is a 289-amino-acid chain: Growth hormone-regulated TBC protein 1 (289 aa).

In terms of domain architecture, Rab-GAP TBC spans 41-211 (LVILTKRAIK…RIWDCLFNEG (171 aa)).

May act as a GTPase-activating protein for Rab family protein(s). This Rattus norvegicus (Rat) protein is Growth hormone-regulated TBC protein 1 (Grtp1).